The sequence spans 1046 residues: Multidrug resistance protein MexB (1046 aa).

At Met-1–Pro-9 the chain is on the cytoplasmic side. Residues Ile-10–Leu-28 traverse the membrane as a helical segment. Residues Ser-29–Glu-339 are Periplasmic-facing. The helical transmembrane segment at Val-340–Leu-359 threads the bilayer. Residues Gln-360 to Thr-365 lie on the Cytoplasmic side of the membrane. A helical transmembrane segment spans residues Leu-366–Ala-385. The Periplasmic segment spans residues Phe-386–Asn-391. The chain crosses the membrane as a helical span at residues Thr-392–Val-413. Residues Glu-414–Ala-441 lie on the Cytoplasmic side of the membrane. The helical transmembrane segment at Leu-442–Gly-460 threads the bilayer. Over Gly-461–Thr-473 the chain is Periplasmic. A helical membrane pass occupies residues Ile-474 to Met-496. The Cytoplasmic portion of the chain corresponds to Leu-497–Arg-538. The chain crosses the membrane as a helical span at residues Ala-539–Thr-557. At Arg-558–Gln-871 the chain is on the periplasmic side. Residues Ala-872 to Tyr-891 form a helical membrane-spanning segment. The Cytoplasmic segment spans residues Glu-892–Pro-897. A helical membrane pass occupies residues Phe-898 to Met-917. The Periplasmic portion of the chain corresponds to Arg-918–Asp-923. The chain crosses the membrane as a helical span at residues Val-924–Val-945. The Cytoplasmic portion of the chain corresponds to Glu-946–Pro-972. A helical transmembrane segment spans residues Ile-973–Thr-991. At Gly-992–Gly-1004 the chain is on the periplasmic side. The chain crosses the membrane as a helical span at residues Val-1005–Val-1027. The Cytoplasmic segment spans residues Ser-1028–Gln-1046.

This sequence belongs to the resistance-nodulation-cell division (RND) (TC 2.A.6) family. Component of the MexAB-OprM multidrug efflux complex, composed of six MexA subunits forming a hexameric tube, binding to a MexB trimer, which interact with the trimeric OprM outer membrane channel protein. OprM is thought to not directly contact MexB; instead, MexA joins MexB and OprM by forming a funnel-like hexamer anchored to the inner membrane. MexA may initially form a hexameric ring complex with MexB prior to OprM, then OprM undergoes a conformational change as it contacts MexA, allowing the periplasmic gate to open. It is thought that, under high intracellular substrate concentration, MexB ejects substrate into the tunnel formed by MexA-OprM; as the substrate level declines, conformational changes in MexB cause efflux to reduce and stop and the complex shifts to the closed state. Acts as a substrate:proton antiporter and activity is enhanced significantly when in complex with MexA and OprM, in vitro.

The protein resides in the cell inner membrane. Export of antibiotics and solvents is dramatically decreased in the presence of the protonophore carbonyl cyanide m-chlorophenylhydrazone (CCCP), therefore may be driven by a proton gradient. Antibiotic efflux is inhibited by pyridopyrimidine derivatives, such as ABI-PP, acting by binding to a hydrophobic pocket in MexB. The inner membrane transporter component of the MexAB-OprM efflux system that confers multidrug resistance. Functions as the major efflux pump for n-hexane and p-xylene efflux. Has been shown in one study to be involved in the active efflux of the autoinducer N-(3-oxododecanoyl) homoserine lactone, thereby playing an indirect role in quorum-sensing; but has been shown in another study not to be involved in efflux of this autoinducer. Over-expression of the pump increases antibiotic and solvent efflux capacities. Implicated in the secretion of the siderophore pyoverdine. The chain is Multidrug resistance protein MexB (mexB) from Pseudomonas aeruginosa (strain ATCC 15692 / DSM 22644 / CIP 104116 / JCM 14847 / LMG 12228 / 1C / PRS 101 / PAO1).